Here is a 334-residue protein sequence, read N- to C-terminus: Putative B3 domain-containing protein At3g49610 (334 aa).

Disordered stretches follow at residues E69 to K89 and D133 to P178. Composition is skewed to polar residues over residues L73–F84 and K141–M157. Residues K161–K173 are compositionally biased toward basic residues. The segment at residues F229–E334 is a DNA-binding region (TF-B3).

Its subcellular location is the nucleus. In Arabidopsis thaliana (Mouse-ear cress), this protein is Putative B3 domain-containing protein At3g49610.